The following is an 83-amino-acid chain: Subtilisin-chymotrypsin inhibitor CI-1B (83 aa).

The interval 1-28 (MRSMEGSVPKYPEPTEGSIGASGAKRSW) is disordered.

This sequence belongs to the protease inhibitor I13 (potato type I serine protease inhibitor) family.

Inhibits both subtilisin and chymotrypsin. The polypeptide is Subtilisin-chymotrypsin inhibitor CI-1B (Hordeum vulgare (Barley)).